Here is a 651-residue protein sequence, read N- to C-terminus: UvrABC system protein B (651 aa).

The Helicase ATP-binding domain occupies 25–178 (RGISCGAKEQ…CQLQERLVEL (154 aa)). 38–45 (GVTGSGKT) is a binding site for ATP. Positions 91–114 (YYDYYQPEAYIPQSDVYIEKDALI) match the Beta-hairpin motif. The Helicase C-terminal domain maps to 427–591 (DGQIHDVMCE…IVPRTIQKPV (165 aa)). Residues 593–615 (TSLSERVGSSRKKVSRDTNTDPA) are disordered. One can recognise a UVR domain in the interval 616 to 651 (NRDIVELQKEMLLCAENLDFERAVEIRNEIKRLTAP).

Belongs to the UvrB family. In terms of assembly, forms a heterotetramer with UvrA during the search for lesions. Interacts with UvrC in an incision complex.

The protein localises to the cytoplasm. Its function is as follows. The UvrABC repair system catalyzes the recognition and processing of DNA lesions. A damage recognition complex composed of 2 UvrA and 2 UvrB subunits scans DNA for abnormalities. Upon binding of the UvrA(2)B(2) complex to a putative damaged site, the DNA wraps around one UvrB monomer. DNA wrap is dependent on ATP binding by UvrB and probably causes local melting of the DNA helix, facilitating insertion of UvrB beta-hairpin between the DNA strands. Then UvrB probes one DNA strand for the presence of a lesion. If a lesion is found the UvrA subunits dissociate and the UvrB-DNA preincision complex is formed. This complex is subsequently bound by UvrC and the second UvrB is released. If no lesion is found, the DNA wraps around the other UvrB subunit that will check the other stand for damage. This chain is UvrABC system protein B, found in Anaplasma marginale (strain Florida).